We begin with the raw amino-acid sequence, 385 residues long: MALEAGDMEEGQLSDSDSDMTVVPSDRPLQMAKVLGGGSAACAPVSHYRTVKHVDSSEESLDSDDDCSLWKRKRQKCHNTPPKPEPFPFGPSGQKTALNGGKKVNNIWGAVLQEQNQDAVATELGILGMEGSIDRSRQSETYNYLLAKKLAKKESQEYTKELDKDLDEYMHGDKKPGSKEDENGQGHLKRKRPVRDRLGNRVEMNYKGRYEITEEDAPEKVADEIAFRLQEPKKDLIARVVRILGNKKAIELLMETAEVEQNGGLFIMNGSRRRTPGGVFLNLLKNTPSISEEQIKDIFYVENQKEYENKKAARKRRTQLLGKKMKQAIKSLNFQEDDDTSRETFASDTNEALASLDEAQEGPGETKLDAEEAIEVDHPQDLDIF.

The span at 1–18 (MALEAGDMEEGQLSDSDS) shows a compositional bias: acidic residues. The disordered stretch occupies residues 1 to 28 (MALEAGDMEEGQLSDSDSDMTVVPSDRP). Ala2 bears the N-acetylalanine mark. Residues 2 to 320 (ALEAGDMEEG…KAARKRRTQL (319 aa)) form a necessary for interaction with CBP80 region. Phosphoserine is present on residues Ser14, Ser16, Ser56, Ser57, Ser60, and Ser63. The Nuclear localization signal signature appears at 71-74 (KRKR). A disordered region spans residues 75–101 (QKCHNTPPKPEPFPFGPSGQKTALNGG). The Nuclear export signal signature appears at 120–129 (VATELGILGM). Over residues 164-184 (KDLDEYMHGDKKPGSKEDENG) the composition is skewed to basic and acidic residues. Residues 164-192 (KDLDEYMHGDKKPGSKEDENGQGHLKRKR) are disordered. The short motif at 189–192 (KRKR) is the Nuclear localization signal element. Positions 219 to 319 (EKVADEIAFR…KKAARKRRTQ (101 aa)) are sufficient for poly U RNA-binding. Residues 270–278 (GSRRRTPGG) are necessary for poly U RNA-binding and snRNA export. Thr287 bears the Phosphothreonine mark. The interval 335 to 385 (QEDDDTSRETFASDTNEALASLDEAQEGPGETKLDAEEAIEVDHPQDLDIF) is disordered. The span at 343–352 (ETFASDTNEA) shows a compositional bias: polar residues. A Phosphoserine modification is found at Ser347. Over residues 364 to 385 (GETKLDAEEAIEVDHPQDLDIF) the composition is skewed to basic and acidic residues.

Belongs to the PHAX family. In terms of assembly, found in a U snRNA export complex with PHAX/RNUXA, NCBP1/CBP80, NCBP2/CBP20, RAN, XPO1 and m7G-capped RNA. Part of a precomplex with PHAX/RNUXA, NCBP1/CBP80, NCBP2/CBP20 and m7G-capped RNA. Interacts with NCBP1/CBP80. Found in a complex with snoRNA. Interacts with NCBP2/CBP20. Interacts with DDX39A; this interaction stimulates PHAX RNA binding activity. In terms of processing, phosphorylated in the nucleus. Dephosphorylated in the cytoplasm.

It is found in the nucleus. The protein localises to the nucleoplasm. It localises to the cajal body. Its subcellular location is the cytoplasm. Functionally, a phosphoprotein adapter involved in the XPO1-mediated U snRNA export from the nucleus. Bridge components required for U snRNA export, the cap binding complex (CBC)-bound snRNA on the one hand and the GTPase Ran in its active GTP-bound form together with the export receptor XPO1 on the other. Its phosphorylation in the nucleus is required for U snRNA export complex assembly and export, while its dephosphorylation in the cytoplasm causes export complex disassembly. It is recycled back to the nucleus via the importin alpha/beta heterodimeric import receptor. The directionality of nuclear export is thought to be conferred by an asymmetric distribution of the GTP- and GDP-bound forms of Ran between the cytoplasm and nucleus. Its compartmentalized phosphorylation cycle may also contribute to the directionality of export. Binds strongly to m7G-capped U1 and U5 small nuclear RNAs (snRNAs) in a sequence-unspecific manner and phosphorylation-independent manner. Also plays a role in the biogenesis of U3 small nucleolar RNA (snoRNA). Involved in the U3 snoRNA transport from nucleoplasm to Cajal bodies. Binds strongly to m7G-capped U3, U8 and U13 precursor snoRNAs and weakly to trimethylated (TMG)-capped U3, U8 and U13 snoRNAs. Also binds to telomerase RNA. The polypeptide is Phosphorylated adapter RNA export protein (Phax) (Mus musculus (Mouse)).